Here is a 240-residue protein sequence, read N- to C-terminus: ATP-dependent dethiobiotin synthetase BioD 1 (240 aa).

An ATP-binding site is contributed by 13-18 (DVGKTV). Thr17 serves as a coordination point for Mg(2+). Lys38 is an active-site residue. Residue Ser42 participates in substrate binding. Residues Asp55, 116–119 (EGAG), 176–177 (NE), 205–207 (PYL), and Glu212 each bind ATP. Mg(2+)-binding residues include Asp55 and Glu116.

Belongs to the dethiobiotin synthetase family. As to quaternary structure, homodimer. Mg(2+) serves as cofactor.

It is found in the cytoplasm. The catalysed reaction is (7R,8S)-7,8-diammoniononanoate + CO2 + ATP = (4R,5S)-dethiobiotin + ADP + phosphate + 3 H(+). It functions in the pathway cofactor biosynthesis; biotin biosynthesis; biotin from 7,8-diaminononanoate: step 1/2. Functionally, catalyzes a mechanistically unusual reaction, the ATP-dependent insertion of CO2 between the N7 and N8 nitrogen atoms of 7,8-diaminopelargonic acid (DAPA, also called 7,8-diammoniononanoate) to form a ureido ring. This chain is ATP-dependent dethiobiotin synthetase BioD 1, found in Yersinia pestis.